The following is a 538-amino-acid chain: Putative cysteine ligase BshC (538 aa).

The stretch at 460–484 (KINEQIELLERMLKRNVEKKHEVEL) forms a coiled coil.

The protein belongs to the BshC family.

Its function is as follows. Involved in bacillithiol (BSH) biosynthesis. May catalyze the last step of the pathway, the addition of cysteine to glucosamine malate (GlcN-Mal) to generate BSH. The protein is Putative cysteine ligase BshC of Bacillus cereus (strain AH187).